The chain runs to 187 residues: Large ribosomal subunit protein bL21 (187 aa).

The disordered stretch occupies residues 157 to 187 (KVAKKAVKKTVKKATKTGAKKKAAKKTSKKA).

It belongs to the bacterial ribosomal protein bL21 family. Part of the 50S ribosomal subunit. Contacts protein L20.

In terms of biological role, this protein binds to 23S rRNA in the presence of protein L20. This is Large ribosomal subunit protein bL21 from Bdellovibrio bacteriovorus (strain ATCC 15356 / DSM 50701 / NCIMB 9529 / HD100).